The following is a 519-amino-acid chain: Membrane-bound lytic murein transglycosylase F (519 aa).

An N-terminal signal peptide occupies residues 1-32 (MKKLKLNYLLIGVVTLLLAVALWPAIPWSGKA). The interval 33 to 269 (DNRIAAIQAR…RLEEKYLGHG (237 aa)) is non-LT domain. Residues 270-519 (NDFDYVDTRS…PNTLSPVSPR (250 aa)) are LT domain. E314 is a catalytic residue. A disordered region spans residues 495–519 (PFSQAGAGGKTHSALPNTLSPVSPR). Residues 508–519 (ALPNTLSPVSPR) are compositionally biased toward polar residues.

This sequence in the N-terminal section; belongs to the bacterial solute-binding protein 3 family. It in the C-terminal section; belongs to the transglycosylase Slt family.

It is found in the cell outer membrane. It carries out the reaction Exolytic cleavage of the (1-&gt;4)-beta-glycosidic linkage between N-acetylmuramic acid (MurNAc) and N-acetylglucosamine (GlcNAc) residues in peptidoglycan, from either the reducing or the non-reducing ends of the peptidoglycan chains, with concomitant formation of a 1,6-anhydrobond in the MurNAc residue.. Functionally, murein-degrading enzyme that degrades murein glycan strands and insoluble, high-molecular weight murein sacculi, with the concomitant formation of a 1,6-anhydromuramoyl product. Lytic transglycosylases (LTs) play an integral role in the metabolism of the peptidoglycan (PG) sacculus. Their lytic action creates space within the PG sacculus to allow for its expansion as well as for the insertion of various structures such as secretion systems and flagella. The sequence is that of Membrane-bound lytic murein transglycosylase F from Cronobacter sakazakii (strain ATCC BAA-894) (Enterobacter sakazakii).